The chain runs to 212 residues: Troponin I, cardiac muscle (212 aa).

The segment covering 1–11 (MADRSGGSTAG) has biased composition (polar residues). A disordered region spans residues 1–45 (MADRSGGSTAGDTVPAPPPVRRRSSANYRAYATEPHAKKKSKISA). Position 2 is an N-acetylalanine (alanine 2). Serine 5 bears the Phosphoserine mark. Phosphoserine; by PKA and PKD/PRKD1 occurs at positions 24 and 25. Tyrosine 28 is modified (phosphotyrosine). Position 33 is a phosphothreonine; by STK4/MST1 (threonine 33). The tract at residues 34–81 (EPHAKKKSKISASRKLQLKTLMLQIAKQELEREAEERRGEKGRALSTR) is involved in binding TNC. Serine 44 and serine 46 each carry phosphoserine; by PKC/PRKCE. At threonine 53 the chain carries Phosphothreonine; by STK4/MST1. Serine 79 carries the phosphoserine modification. A Phosphothreonine modification is found at threonine 80. The tract at residues 131–151 (NQKIFDLRGKFKRPTLRRVRI) is involved in binding TNC and actin. Residue threonine 145 is modified to Phosphothreonine; by STK4/MST1. Phosphoserine; by PAK3 is present on serine 152. Phosphothreonine is present on threonine 183. Serine 201 carries the post-translational modification Phosphoserine.

The protein belongs to the troponin I family. In terms of assembly, interacts with TRIM63. Binds to actin and tropomyosin. Interacts with STK4/MST1. Post-translationally, phosphorylated at Ser-24 and Ser-25 by PRKD1; phosphorylation reduces myofilament calcium sensitivity. Phosphorylated preferentially at Thr-33. Phosphorylation by STK4/MST1 alters its binding affinity to TNNC1 (cardiac Tn-C) and TNNT2 (cardiac Tn-T). Phosphorylated at Ser-44 and Ser-46 by PRKCE; phosphorylation increases myocardium contractile dysfunction.

In terms of biological role, troponin I is the inhibitory subunit of troponin, the thin filament regulatory complex which confers calcium-sensitivity to striated muscle actomyosin ATPase activity. This Bos taurus (Bovine) protein is Troponin I, cardiac muscle (TNNI3).